Consider the following 432-residue polypeptide: Cytochrome c biogenesis protein CcsB (432 aa).

Transmembrane regions (helical) follow at residues 14 to 34, 72 to 92, and 162 to 182; these read LRIA…GTAI, SSWF…CSWR, and VGPM…VWGS.

The protein belongs to the Ccs1/CcsB family. As to quaternary structure, may interact with CcsA.

Its subcellular location is the cellular thylakoid membrane. Its function is as follows. Required during biogenesis of c-type cytochromes (cytochrome c6 and cytochrome f) at the step of heme attachment. The chain is Cytochrome c biogenesis protein CcsB from Prochlorococcus marinus (strain MIT 9303).